Consider the following 110-residue polypeptide: uncharacterized protein (110 aa).

This is an uncharacterized protein from Yersinia enterocolitica.